A 580-amino-acid chain; its full sequence is Acyl-coenzyme A synthetase ACSM4, mitochondrial (580 aa).

The transit peptide at 1-22 (MKVLLRCQRLRFIWLAKPAGRH) directs the protein to the mitochondrion. ATP-binding positions include 229–237 (TSGTTGSPK), 368–373 (EGYGQT), Asp-455, Arg-470, and Lys-566.

Belongs to the ATP-dependent AMP-binding enzyme family. The cofactor is Mg(2+). Mn(2+) is required as a cofactor. As to expression, detected in adult olfactory epithelium.

Its subcellular location is the mitochondrion. It carries out the reaction a medium-chain fatty acid + ATP + CoA = a medium-chain fatty acyl-CoA + AMP + diphosphate. It catalyses the reaction hexanoate + ATP + CoA = hexanoyl-CoA + AMP + diphosphate. The enzyme catalyses octanoate + ATP + CoA = octanoyl-CoA + AMP + diphosphate. The catalysed reaction is decanoate + ATP + CoA = decanoyl-CoA + AMP + diphosphate. It carries out the reaction dodecanoate + ATP + CoA = dodecanoyl-CoA + AMP + diphosphate. Catalyzes the activation of fatty acids by CoA to produce an acyl-CoA, the first step in fatty acid metabolism. Capable of activating medium-chain fatty acids with a preference for C6-12 fatty acids. This chain is Acyl-coenzyme A synthetase ACSM4, mitochondrial (Acsm4), found in Rattus norvegicus (Rat).